The sequence spans 238 residues: Phosphoribosylaminoimidazole-succinocarboxamide synthase (238 aa).

This sequence belongs to the SAICAR synthetase family.

It catalyses the reaction 5-amino-1-(5-phospho-D-ribosyl)imidazole-4-carboxylate + L-aspartate + ATP = (2S)-2-[5-amino-1-(5-phospho-beta-D-ribosyl)imidazole-4-carboxamido]succinate + ADP + phosphate + 2 H(+). Its pathway is purine metabolism; IMP biosynthesis via de novo pathway; 5-amino-1-(5-phospho-D-ribosyl)imidazole-4-carboxamide from 5-amino-1-(5-phospho-D-ribosyl)imidazole-4-carboxylate: step 1/2. The chain is Phosphoribosylaminoimidazole-succinocarboxamide synthase from Chlorobium phaeovibrioides (strain DSM 265 / 1930) (Prosthecochloris vibrioformis (strain DSM 265)).